A 166-amino-acid chain; its full sequence is Large ribosomal subunit protein uL10 (166 aa).

The protein belongs to the universal ribosomal protein uL10 family. As to quaternary structure, part of the ribosomal stalk of the 50S ribosomal subunit. The N-terminus interacts with L11 and the large rRNA to form the base of the stalk. The C-terminus forms an elongated spine to which L12 dimers bind in a sequential fashion forming a multimeric L10(L12)X complex.

Forms part of the ribosomal stalk, playing a central role in the interaction of the ribosome with GTP-bound translation factors. The protein is Large ribosomal subunit protein uL10 of Marinomonas sp. (strain MWYL1).